Here is a 609-residue protein sequence, read N- to C-terminus: Numb-like protein (609 aa).

Disordered stretches follow at residues 1–68, 223–283, 372–421, 434–464, and 537–609; these read MSRS…QWQA, GSFR…PVAA, ASAG…EEVS, QQQQ…QPFP, and AGAF…EIEL. Residues 19–29 are compositionally biased toward pro residues; the sequence is PPAPCGAPGPP. Positions 74–223 constitute a PID domain; sequence RKGTCSFPVR…ASRTSFAREG (150 aa). 2 positions are modified to phosphoserine: S224 and S228. The segment covering 233-245 has biased composition (basic and acidic residues); the sequence is PAEREAPDKKKAE. Residues 246-259 are compositionally biased toward low complexity; sequence AAAAPTVAPGPAQP. S263 bears the Phosphoserine mark. At T279 the chain carries Phosphothreonine. A compositionally biased stretch (basic and acidic residues) spans 409–418; sequence TPSEAERWLE. At S411 the chain carries Phosphoserine. Over residues 434–446 the composition is skewed to low complexity; that stretch reads QQQQQQQQQQQQQ. 2 stretches are compositionally biased toward pro residues: residues 454 to 464 and 558 to 573; these read PTMPPALQPFP and NGAP…PAPE.

As to quaternary structure, interacts (via PTB domain) with MAP3K7IP2 (via C-terminal). Interacts (via C-terminal) with TRAF6 (via TRAF domains). Associates with EPS15 and NOTCH1.

The protein localises to the cytoplasm. Its function is as follows. Plays a role in the process of neurogenesis. Required throughout embryonic neurogenesis to maintain neural progenitor cells, also called radial glial cells (RGCs), by allowing their daughter cells to choose progenitor over neuronal cell fate. Not required for the proliferation of neural progenitor cells before the onset of embryonic neurogenesis. Also required postnatally in the subventricular zone (SVZ) neurogenesis by regulating SVZ neuroblasts survival and ependymal wall integrity. Negative regulator of NF-kappa-B signaling pathway. The inhibition of NF-kappa-B activation is mediated at least in part, by preventing MAP3K7IP2 to interact with polyubiquitin chains of TRAF6 and RIPK1 and by stimulating the 'Lys-48'-linked polyubiquitination and degradation of TRAF6 in cortical neurons. In Homo sapiens (Human), this protein is Numb-like protein (NUMBL).